A 97-amino-acid chain; its full sequence is Protein GLUTAMINE DUMPER 7 (97 aa).

The Extracellular segment spans residues M1–K25. Residues I26–A46 form a helical membrane-spanning segment. Residues C47–A97 are Cytoplasmic-facing. Positions V78 to G82 match the VIMAG motif.

It belongs to the GLUTAMINE DUMPER 1 (TC 9.B.60) family. In terms of tissue distribution, expressed in the vascular tissues, even in the minor veins of the leaves.

The protein localises to the membrane. Functionally, probable subunit of an amino acid transporter involved in the regulation of the amino acid metabolism. Stimulates amino acid export by activating nonselective amino acid facilitators. In Arabidopsis thaliana (Mouse-ear cress), this protein is Protein GLUTAMINE DUMPER 7 (GDU7).